The sequence spans 302 residues: Vomeronasal type-1 receptor 48 (302 aa).

Residues 1–16 are Extracellular-facing; that stretch reads MNENSRLHTHSNIRNT. A helical membrane pass occupies residues 17-37; it reads FFSEIGIGISGNSFLLLFHII. At 38–49 the chain is on the cytoplasmic side; it reads KFFRGHRPRLTD. The chain crosses the membrane as a helical span at residues 50 to 70; the sequence is LPIGLLSLIHLLMLLVAAVIA. At 71 to 91 the chain is on the extracellular side; that stretch reads TDIFISWRGWNDIICKFLVYL. Cys85 and Cys172 are disulfide-bonded. The helical transmembrane segment at 92-114 threads the bilayer; sequence YRSLRGLSLCTTSMLSVLQAIIL. Over 115–131 the chain is Cytoplasmic; it reads SPRSYCLAKFKRKSSHN. A helical transmembrane segment spans residues 132-152; the sequence is ISCAIIFLSVLYMSISSHLLI. The Extracellular portion of the chain corresponds to 153–193; the sequence is SITATPNLTMNDFLYVSQSCSLLPLSYLMQSIYSTLLVLRE. The N-linked (GlcNAc...) asparagine glycan is linked to Asn159. The chain crosses the membrane as a helical span at residues 194–214; that stretch reads VFLIGLMVLSTSYMVALLYMH. Residues 215 to 238 lie on the Cytoplasmic side of the membrane; it reads RKQAQNLQGTSLSLKASAEQRATQ. A helical membrane pass occupies residues 239-259; that stretch reads TILMLMTFFVLMSIFDSIVSC. Topologically, residues 260–269 are extracellular; the sequence is SRTMFLDDPT. The helical transmembrane segment at 270–290 threads the bilayer; it reads SYSIHIFVMHIYATVSPFVFI. The Cytoplasmic segment spans residues 291–302; the sequence is STEKHIVNILRG.

The protein belongs to the G-protein coupled receptor 1 family.

It localises to the cell membrane. In terms of biological role, putative pheromone receptor implicated in the regulation of social and reproductive behavior. The protein is Vomeronasal type-1 receptor 48 (Vmn1r48) of Mus musculus (Mouse).